Reading from the N-terminus, the 89-residue chain is Small ribosomal subunit protein uS15 (89 aa).

It belongs to the universal ribosomal protein uS15 family. Part of the 30S ribosomal subunit. Forms a bridge to the 50S subunit in the 70S ribosome, contacting the 23S rRNA.

Its function is as follows. One of the primary rRNA binding proteins, it binds directly to 16S rRNA where it helps nucleate assembly of the platform of the 30S subunit by binding and bridging several RNA helices of the 16S rRNA. In terms of biological role, forms an intersubunit bridge (bridge B4) with the 23S rRNA of the 50S subunit in the ribosome. This is Small ribosomal subunit protein uS15 from Beijerinckia indica subsp. indica (strain ATCC 9039 / DSM 1715 / NCIMB 8712).